The chain runs to 160 residues: uncharacterized protein (160 aa).

The protein resides in the mitochondrion. This is an uncharacterized protein from Arabidopsis thaliana (Mouse-ear cress).